The chain runs to 745 residues: Pentatricopeptide repeat-containing protein At1g71420 (745 aa).

PPR repeat units follow at residues 58 to 88 (SQQA…MLSH), 95 to 125 (NVIL…MPER), 126 to 160 (NVVS…CFPN), 191 to 224 (SIYV…IKFK), 225 to 259 (NLVT…GVGF), 260 to 296 (DRAT…TVKS), 301 to 332 (QTEV…MSHC), 334 to 367 (DIVA…KLSP), 368 to 402 (DWYT…GFLA), 403 to 437 (DTVL…DVVS), 438 to 464 (WNSM…MDIN), 466 to 496 (DSAT…MFEK), and 502 to 532 (QLNH…MPMD). The segment at 537 to 613 (VWIALLGSCR…EPDLSWTEIG (77 aa)) is type E motif. The type E(+) motif stretch occupies residues 614-644 (NKVHEFASGGRHRPDKEAVYRELKRLISWLK). The tract at residues 645 to 745 (EMGYVPEMRS…DSSCSCNDYW (101 aa)) is type DYW motif.

Belongs to the PPR family. PCMP-H subfamily.

This chain is Pentatricopeptide repeat-containing protein At1g71420 (PCMP-H70), found in Arabidopsis thaliana (Mouse-ear cress).